The following is a 247-amino-acid chain: uncharacterized protein (247 aa).

The segment at 161–187 is disordered; it reads KEQSDATSDATTSEKNKSPECPKATTE. The span at 172 to 187 shows a compositional bias: basic and acidic residues; the sequence is TSEKNKSPECPKATTE.

This is an uncharacterized protein from Mus musculus (Mouse).